The sequence spans 476 residues: Protein DETOXIFICATION 3 (476 aa).

Helical transmembrane passes span 35 to 55 (AAPM…SVMV), 66 to 86 (GVAL…FGLA), 117 to 137 (IPIC…LISL), 146 to 166 (VAGS…FFIP), 185 to 205 (LTTL…FGLG), 208 to 228 (GAAM…SCYV), 260 to 280 (AAMV…SGLL), 289 to 309 (VLSI…GVAA), 331 to 351 (VLAG…LLFT), 370 to 390 (VANL…TAVL), 402 to 422 (IGAL…GVYL), and 433 to 453 (LWCG…FVTA).

It belongs to the multi antimicrobial extrusion (MATE) (TC 2.A.66.1) family.

Its subcellular location is the membrane. This chain is Protein DETOXIFICATION 3, found in Arabidopsis thaliana (Mouse-ear cress).